Reading from the N-terminus, the 894-residue chain is Alanine--tRNA ligase (894 aa).

Zn(2+) contacts are provided by His-587, His-591, Cys-691, and His-695. The tract at residues 739–758 (AEGDRAAEEAKGRLQEERDA) is disordered.

Belongs to the class-II aminoacyl-tRNA synthetase family. It depends on Zn(2+) as a cofactor.

Its subcellular location is the cytoplasm. The enzyme catalyses tRNA(Ala) + L-alanine + ATP = L-alanyl-tRNA(Ala) + AMP + diphosphate. Catalyzes the attachment of alanine to tRNA(Ala) in a two-step reaction: alanine is first activated by ATP to form Ala-AMP and then transferred to the acceptor end of tRNA(Ala). Also edits incorrectly charged Ser-tRNA(Ala) and Gly-tRNA(Ala) via its editing domain. The chain is Alanine--tRNA ligase from Cenarchaeum symbiosum (strain A).